Here is a 2041-residue protein sequence, read N- to C-terminus: MSGGRQRTLPEAWRRAAGPALQAGRDADGNDDDDDELLAAAAAELDPDPNPNVDPNPGPGPEAAAGGFCAAAGALWIYPTNRPERPYQLRMARAALFANTLLCLPTGLGKTFVAAVVMYNFYRWFPSGKVLFLAPTKALVAQQMEACAQLMGIPGRDMAEMTGGTQALSRRELWASRRVFFLTPQIMVNDLSRGTCPAVEVKCLVVDEAHKALGNHAYCQVVKELSRYTTQFRVLALTATPGSDTKAVQQVVSNLLIAQIELCSEDSPEIQPYSHERQVEKIVVPLGEELGGIQRAYIHVLETFAGRLIKLGVLARRDVPSLTKYQIILARDQYRKNPSPQNVGMQPGIIEGDFALCISLYHGYELLQQMGVRSLFIYLCGIMDGSKGLTRTKNELGRNEDFMRLYQQLTDMFSDTCQTSANGNLHKSRTVSENKKEFIYSHPKLKKLEEIVIEHFKSRKMGCSDQTTSGGTCVDTRVMIFSSFRDSVQEIAEMLSRFSPVVRVMTFVGHSTGKSTKGFTQKEQLEVVKRFREGGYNTLVSTCVGEEGLDIGEVDLIICFDAQKSPIRLVQRMGRTGRQRQGRVVVILAEGREERTYNQSQSNRRSIQKAISGNKMLHFYQHSPRMIPEGINPELHRMFITAEKYKPNDSGRLPKGRPSSLHHKSALFSCVTDPKEMHCHENWSLSPEEFEIWDRLYRLKENDGVKEPILPHTRFETLENLDKTSKPEEEAAHKLSLSEWSIWQSRPFPTSMVDHSDRCYHFISVMELIEVMRQEQGDCSYELELQPHLRIEDIHVRRNKGHLSTTSSAFAQKTHSSKRDMARTKRPFVPDVNDNEREFFSIFKTTNTKTPRTAPGLDLEEPELPTDTNGSEPCSARRLTLVASTDQGSPKEEEIEKVTFDLNEFNDLCDDGESTVAHESAAVKDLRLLDKHCSSVGLNHTDLGYSSFTAEKSPASSDLFYLPESHVDSFVLVSSSAELAGLEGAFSCVKGLLAHSPPPVSKLEGIEELLRHEETLCPLPKVSCRSYSGQLPHGDFPSSLAVDQSLLPAESPELEVTIGLSAAVNTCVSKPASTPTAAGGAEERPPGGGSFHSLLGKEGFTANHTDNPPNKHFVQGDEEDSEMKRDVTIDGEKSIHLFEDEHTYKVNDEMPSVDVEPLLRLGSGGHTARPSAGPASQQPPSGDSPRGDTACGEGAARGEMAPGGAWGRGSAAEQALHNSELCDYSQELFSVNFDLGFSIEECEEEIFEGDTDAMNTPKLNSASRSRADVQLTANRKSLNDGCRVQTPPKWDCKGLKGRNISTPLPLQSGHVRDTAVPGGTAGGRTGRGSPGASPPSPATPTGRRVSSAEATRRIRKKVFSTVREETPEVCPTDKVNPNSQRNSFGSSASDALHTTGGRTENLEGTNLHTSRVFPAEGTSSESEEEIVFQRKNRRNNVLRSPDVGSDSDFGSPVCAVRKRRHPLTVSDVSSDDGVDFHKNPNRGTRGCSAAGSKAQLRGVKRQKVRSKVTCKNAARQFLDEEAELSQQDESCVSSDETEDTDKELSSSLAQFLNDDAEVTQVLNDSEMRGVYLKSVRSPALGSRYRMVHREFNSTEIFSQIPEQDEAYAEDSFCVAEGDEETCNKSESSEEEEVCVNFDLLNNESFGGGGGRYLTRRRKKLHGANMEQNCSAPVQKKPSRIIVLSDSSGEETNVSNEKGTAAHCSRAGRENAELLTSMPSVSSVPHKKSAGDVSAHQSAESKSGMLLGLKASVSEVLDFHPGPRSGSGKEALQAAAQHLQLESSVKNSAGNAPGATKASPALLDGDTALCVLVDSREISSGADVISSLKAVHGLKVQVCSLGSGDYVVSNRMAVERKFQSELLSSVNRTKVTQRLQRLQGMFERVCVIVEKDRTRPGETSRFSQRTQHYDATLAALLQAGIRVLFSSCQEETAVLLKELALLEQRKNAAICVPTEVEGHKQEMLNFYLSLPNISYLAALNMCHHFSSVRTMVNSSPSDIAAGARVSLQRAEETYRYLRYGFDTQMLPESLCAKGKSNTATRS.

The tract at residues 1–64 is disordered; sequence MSGGRQRTLP…PNPGPGPEAA (64 aa). A compositionally biased stretch (pro residues) spans 48–60; sequence DPNPNVDPNPGPG. The region spanning 91 to 259 is the Helicase ATP-binding domain; that stretch reads MARAALFANT…QVVSNLLIAQ (169 aa). Position 104 to 111 (104 to 111) interacts with ATP; that stretch reads LPTGLGKT. A DEAH box motif is present at residues 207 to 210; sequence DEAH. In terms of domain architecture, Helicase C-terminal spans 447–631; sequence KLEEIVIEHF…HSPRMIPEGI (185 aa). The segment covering 802-814 has biased composition (polar residues); that stretch reads HLSTTSSAFAQKT. Disordered stretches follow at residues 802–822, 848–874, 1070–1124, 1158–1208, 1301–1403, 1465–1491, and 1685–1740; these read HLSTTSSAFAQKTHSSKRDMA, TKTPRTAPGLDLEEPELPTDTNGSEPC, KPAS…SEMK, LLRL…AWGR, STPL…ENLE, VSDVSSDDGVDFHKNPNRGTRGCSAAG, and DSSG…SAES. Low complexity predominate over residues 1170–1181; the sequence is PSAGPASQQPPS. The segment covering 1319–1329 has biased composition (gly residues); that stretch reads GTAGGRTGRGS. Residues 1375–1389 show a composition bias toward polar residues; that stretch reads VNPNSQRNSFGSSAS. Polar residues predominate over residues 1685–1697; it reads DSSGEETNVSNEK.

This sequence belongs to the DEAD box helicase family. DEAH subfamily. FANCM sub-subfamily. In terms of assembly, component of the Fanconi anemia (FA) core complex. The FA core complex associates with Bloom syndrome (BLM) complex. This supercomplex between FA and BLM complexes has been called BRAFT. In terms of processing, phosphorylated; hyperphosphorylated in response to genotoxic stress.

The protein resides in the nucleus. It catalyses the reaction ATP + H2O = ADP + phosphate + H(+). In terms of biological role, DNA-dependent ATPase component of the Fanconi anemia (FA) core complex. Required for the normal activation of the FA pathway, leading to monoubiquitination of the FANCI-FANCD2 complex in response to DNA damage, cellular resistance to DNA cross-linking drugs, and prevention of chromosomal breakage. In complex with CENPS and CENPX, binds double-stranded DNA (dsDNA), fork-structured DNA (fsDNA) and Holliday junction substrates. Its ATP-dependent DNA branch migration activity can process branched DNA structures such as a movable replication fork. This activity is strongly stimulated in the presence of CENPS and CENPX. In complex with FAAP24, efficiently binds to single-strand DNA (ssDNA), splayed-arm DNA, and 3'-flap substrates. In vitro, on its own, strongly binds ssDNA oligomers and weakly fsDNA, but does not bind to dsDNA. The polypeptide is Fanconi anemia group M protein (FANCM) (Gallus gallus (Chicken)).